Reading from the N-terminus, the 266-residue chain is Tryptophan synthase alpha chain (266 aa).

Catalysis depends on proton acceptor residues Glu49 and Asp60.

Belongs to the TrpA family. As to quaternary structure, tetramer of two alpha and two beta chains.

The catalysed reaction is (1S,2R)-1-C-(indol-3-yl)glycerol 3-phosphate + L-serine = D-glyceraldehyde 3-phosphate + L-tryptophan + H2O. The protein operates within amino-acid biosynthesis; L-tryptophan biosynthesis; L-tryptophan from chorismate: step 5/5. In terms of biological role, the alpha subunit is responsible for the aldol cleavage of indoleglycerol phosphate to indole and glyceraldehyde 3-phosphate. This chain is Tryptophan synthase alpha chain, found in Synechococcus elongatus (strain ATCC 33912 / PCC 7942 / FACHB-805) (Anacystis nidulans R2).